The following is a 212-amino-acid chain: Large ribosomal subunit protein uL4 (212 aa).

Belongs to the universal ribosomal protein uL4 family. As to quaternary structure, part of the 50S ribosomal subunit.

One of the primary rRNA binding proteins, this protein initially binds near the 5'-end of the 23S rRNA. It is important during the early stages of 50S assembly. It makes multiple contacts with different domains of the 23S rRNA in the assembled 50S subunit and ribosome. In terms of biological role, forms part of the polypeptide exit tunnel. The polypeptide is Large ribosomal subunit protein uL4 (Caulobacter vibrioides (strain ATCC 19089 / CIP 103742 / CB 15) (Caulobacter crescentus)).